The sequence spans 124 residues: Prefoldin subunit beta (124 aa).

Belongs to the prefoldin subunit beta family. In terms of assembly, heterohexamer of two alpha and four beta subunits.

The protein localises to the cytoplasm. Molecular chaperone capable of stabilizing a range of proteins. Seems to fulfill an ATP-independent, HSP70-like function in archaeal de novo protein folding. The polypeptide is Prefoldin subunit beta (pfdB) (Thermoplasma acidophilum (strain ATCC 25905 / DSM 1728 / JCM 9062 / NBRC 15155 / AMRC-C165)).